Reading from the N-terminus, the 142-residue chain is NTF2-related export protein 2 (142 aa).

Positions 17-136 (AAEEFVNIYY…WKIASDCFRF (120 aa)) constitute an NTF2 domain.

In terms of assembly, associates with NXF1, NXF2, NXF3 and NXF5.

It localises to the nucleus. The protein localises to the cytoplasm. Its function is as follows. Regulator of protein export for NES-containing proteins. Also plays a role in mRNA nuclear export. The protein is NTF2-related export protein 2 (Nxt2) of Mus musculus (Mouse).